The chain runs to 185 residues: Ribosome-recycling factor (185 aa).

Over residues 142–164 the composition is skewed to basic and acidic residues; it reads IKKDGDAGEDDVTRAEKDLDKST. The disordered stretch occupies residues 142 to 173; sequence IKKDGDAGEDDVTRAEKDLDKSTHQYTSQVDD.

This sequence belongs to the RRF family.

Its subcellular location is the cytoplasm. Responsible for the release of ribosomes from messenger RNA at the termination of protein biosynthesis. May increase the efficiency of translation by recycling ribosomes from one round of translation to another. This is Ribosome-recycling factor from Mycolicibacterium gilvum (strain PYR-GCK) (Mycobacterium gilvum (strain PYR-GCK)).